Here is a 777-residue protein sequence, read N- to C-terminus: Glucocorticoid receptor (777 aa).

Residues 1 to 14 are compositionally biased toward basic and acidic residues; sequence MDSKESLTPGKEEN. Positions 1–21 are disordered; that stretch reads MDSKESLTPGKEENPSSVLTQ. The segment at 1 to 420 is modulating; that stretch reads MDSKESLTPG…TATTGPPPKL (420 aa). T8 carries the phosphothreonine modification. Omega-N-methylarginine is present on R23. A phosphoserine mark is found at S45, S113, S134, and S141. Positions 130–182 are disordered; it reads NRSTSVPENPKSSASSSVSAAPKEKEFPKTHSDVSSEQQNLKGQTGTNGGNVK. A compositionally biased stretch (low complexity) spans 134–150; that stretch reads SVPENPKSSASSSVSAA. The span at 151 to 163 shows a compositional bias: basic and acidic residues; the sequence is PKEKEFPKTHSDV. The segment covering 164–174 has biased composition (polar residues); sequence SSEQQNLKGQT. Phosphoserine is present on residues S203, S211, and S226. K258 participates in a covalent cross-link: Glycyl lysine isopeptide (Lys-Gly) (interchain with G-Cter in SUMO2). The residue at position 267 (S267) is a Phosphoserine. Glycyl lysine isopeptide (Lys-Gly) (interchain with G-Cter in SUMO); alternate cross-links involve residues K277 and K293. Glycyl lysine isopeptide (Lys-Gly) (interchain with G-Cter in SUMO2); alternate cross-links involve residues K277 and K293. Over residues 394–414 the composition is skewed to low complexity; the sequence is SSPSMRPDVSSPPSSSSTATT. The disordered stretch occupies residues 394–415; sequence SSPSMRPDVSSPPSSSSTATTG. S404 carries the post-translational modification Phosphoserine. K419 is covalently cross-linked (Glycyl lysine isopeptide (Lys-Gly) (interchain with G-Cter in ubiquitin)). NR C4-type zinc fingers lie at residues 421 to 441 and 457 to 481; these read CLVC…CGSC and CAGR…YRKC. The segment at residues 421-486 is a DNA-binding region (nuclear receptor); sequence CLVCSDEASG…RYRKCLQAGM (66 aa). K480, K492, K494, and K495 each carry N6-acetyllysine. Residues 485–777 are interaction with CLOCK; it reads GMNLEARKTK…NIKKLLFHQK (293 aa). The hinge stretch occupies residues 487–523; it reads NLEARKTKKKIKGIQQATTGVSQETSENPANKTIVPA. The NR LBD domain occupies 524 to 758; it reads TLPQLTPTLV…FPEMLAEIIT (235 aa). Positions 532-697 are interaction with CRY1; it reads LVSLLEVIEP…EIRMTYIKEL (166 aa). K703 participates in a covalent cross-link: Glycyl lysine isopeptide (Lys-Gly) (interchain with G-Cter in SUMO).

The protein belongs to the nuclear hormone receptor family. NR3 subfamily. As to quaternary structure, heteromultimeric cytoplasmic complex with HSP90AA1, HSPA1A/HSPA1B, and FKBP5 or another immunophilin such as PPID, STIP1, or the immunophilin homolog PPP5C. Upon ligand binding FKBP5 dissociates from the complex and FKBP4 takes its place, thereby linking the complex to dynein and mediating transport to the nucleus, where the complex dissociates. Probably forms a complex composed of chaperones HSP90 and HSP70, co-chaperones CDC37, PPP5C, TSC1 and client protein TSC2, CDK4, AKT, RAF1 and NR3C1; this complex does not contain co-chaperones STIP1/HOP and PTGES3/p23. Directly interacts with UNC45A. Binds to DNA as a homodimer, and as heterodimer with NR3C2 or the retinoid X receptor. Binds STAT5A and STAT5B homodimers and heterodimers. Interacts with NRIP1, POU2F1, POU2F2 and TRIM28. Interacts with several coactivator complexes, including the SMARCA4 complex, CREBBP/EP300, TADA2L (Ada complex) and p160 coactivators such as NCOA2 and NCOA6. Interaction with BAG1 inhibits transactivation. Interacts with HEXIM1 and TGFB1I1. Interacts with NCOA1. Interacts with NCOA3, SMARCA4, SMARCC1, SMARCD1, and SMARCE1. Interacts with CLOCK, CRY1 and CRY2 in a ligand-dependent fashion. Interacts with CIART. Interacts with RWDD3. Interacts with UBE2I/UBC9 and this interaction is enhanced in the presence of RWDD3. Interacts with GRIP1. Interacts with NR4A3 (via nuclear receptor DNA-binding domain), represses transcription activity of NR4A3 on the POMC promoter Nur response element (NurRE). Directly interacts with PNRC2 to attract and form a complex with UPF1 and DCP1A; the interaction leads to rapid mRNA degradation. Interacts with GSK3B. Interacts with FNIP1 and FNIP2. Interacts (via C-terminus) with HNRNPU (via C-terminus). Interacts with MCM3AP. Interacts (via domain NR LBD) with HSP90AA1 and HSP90AB1. In the absence of hormonal ligand, interacts with TACC1. Interacts (via NR LBD domain) with ZNF764 (via KRAB domain); the interaction regulates transcription factor activity of NR3C1 by directing its actions toward certain biologic pathways. Acetylation by CLOCK reduces its binding to glucocorticoid response elements and its transcriptional activity. Post-translationally, increased proteasome-mediated degradation in response to glucocorticoids. In terms of processing, phosphorylated in the absence of hormone; becomes hyperphosphorylated in the presence of glucocorticoid. The Ser-203, Ser-226 and Ser-404-phosphorylated forms are mainly cytoplasmic, and the Ser-211-phosphorylated form is nuclear. Phosphorylation at Ser-211 increases transcriptional activity. Phosphorylation at Ser-203, Ser-226 and Ser-404 decreases signaling capacity. Phosphorylation at Ser-404 may protect from glucocorticoid-induced apoptosis. Phosphorylation at Ser-203 and Ser-211 is not required in regulation of chromosome segregation. May be dephosphorylated by PPP5C, attenuates NR3C1 action. Ubiquitinated by UBR5, leading to its degradation: UBR5 specifically recognizes and binds ligand-bound NR3C1 when it is not associated with coactivators (NCOAs). In presence of NCOAs, the UBR5-degron is not accessible, preventing its ubiquitination and degradation. Post-translationally, sumoylation at Lys-277 and Lys-293 negatively regulates its transcriptional activity. Sumoylation at Lys-703 positively regulates its transcriptional activity in the presence of RWDD3. Sumoylation at Lys-277 and Lys-293 is dispensable whereas sumoylation at Lys-703 is critical for the stimulatory effect of RWDD3 on its transcriptional activity. Heat shock increases sumoylation in a RWDD3-dependent manner. As to expression, within the infant and adult hippocampal formation, highest expression observed in the DG granule cell layer with moderate levels in the DG hilus, the CA2-CA4 pyramidal cell layer and the proximal part of the CA1 pyramidal cell layer. Moderate to high expression levels found in the presubiculum and in its' superficial layers. Weak but specific expression detected throughout the entire corticle mantle. In the amygdala, moderate levels were detected in the lateral, central and medial nuclei. Moderate expression levels were present in the PVNh alongside the third ventricle.

The protein resides in the cytoplasm. It is found in the nucleus. The protein localises to the mitochondrion. It localises to the cytoskeleton. Its subcellular location is the spindle. The protein resides in the microtubule organizing center. It is found in the centrosome. The protein localises to the chromosome. It localises to the nucleoplasm. In terms of biological role, receptor for glucocorticoids (GC). Has a dual mode of action: as a transcription factor that binds to glucocorticoid response elements (GRE), both for nuclear and mitochondrial DNA, and as a modulator of other transcription factors. Affects inflammatory responses, cellular proliferation and differentiation in target tissues. Involved in chromatin remodeling. Plays a role in rapid mRNA degradation by binding to the 5' UTR of target mRNAs and interacting with PNRC2 in a ligand-dependent manner which recruits the RNA helicase UPF1 and the mRNA-decapping enzyme DCP1A, leading to RNA decay. Could act as a coactivator for STAT5-dependent transcription upon growth hormone (GH) stimulation and could reveal an essential role of hepatic GR in the control of body growth. Mediates glucocorticoid-induced apoptosis. Promotes accurate chromosome segregation during mitosis. May act as a tumor suppressor. May play a negative role in adipogenesis through the regulation of lipolytic and antilipogenic gene expression. The polypeptide is Glucocorticoid receptor (NR3C1) (Callithrix jacchus (White-tufted-ear marmoset)).